The chain runs to 348 residues: Peptide-N(4)-(N-acetyl-beta-glucosaminyl)asparagine amidase (348 aa).

Positions 116, 119, 151, and 154 each coordinate Zn(2+). The active-site Nucleophile is the cysteine 177. Residues histidine 204 and aspartate 221 contribute to the active site. A substrate-binding site is contributed by glutamate 224. The segment at 311–348 is disordered; sequence PSATPTKEMQKLKISKTGNKGRISGSAEWKESRGENGK. Positions 338-348 are enriched in basic and acidic residues; sequence EWKESRGENGK.

This sequence belongs to the transglutaminase-like superfamily. PNGase family. Zn(2+) serves as cofactor.

It is found in the cytoplasm. It carries out the reaction Hydrolysis of an N(4)-(acetyl-beta-D-glucosaminyl)asparagine residue in which the glucosamine residue may be further glycosylated, to yield a (substituted) N-acetyl-beta-D-glucosaminylamine and a peptide containing an aspartate residue.. Its function is as follows. Specifically deglycosylates the denatured form of N-linked glycoproteins in the cytoplasm and assists their proteasome-mediated degradation. Cleaves the beta-aspartyl-glucosamine (GlcNAc) of the glycan and the amide side chain of Asn, converting Asn to Asp. Prefers proteins containing high-mannose over those bearing complex type oligosaccharides. Can recognize misfolded proteins in the endoplasmic reticulum that are exported to the cytosol to be destroyed and deglycosylate them, while it has no activity toward native proteins. Deglycosylation is a prerequisite for subsequent proteasome-mediated degradation of some, but not all, misfolded glycoproteins. This Candida glabrata (strain ATCC 2001 / BCRC 20586 / JCM 3761 / NBRC 0622 / NRRL Y-65 / CBS 138) (Yeast) protein is Peptide-N(4)-(N-acetyl-beta-glucosaminyl)asparagine amidase (PNG1).